We begin with the raw amino-acid sequence, 359 residues long: UPF0283 membrane protein RHE_CH02332 (359 aa).

A disordered region spans residues 1–61 (MSKPPSDLPR…EDPFINPDRD (61 aa)). The next 2 membrane-spanning stretches (helical) occupy residues 77 to 97 (FGKIALAAFGILLSLGIGLWT) and 111 to 131 (LGYAALGVLAIGILAVLALVI).

This sequence belongs to the UPF0283 family.

The protein localises to the cell inner membrane. This Rhizobium etli (strain ATCC 51251 / DSM 11541 / JCM 21823 / NBRC 15573 / CFN 42) protein is UPF0283 membrane protein RHE_CH02332.